A 276-amino-acid chain; its full sequence is Formamidopyrimidine-DNA glycosylase (276 aa).

Pro-2 (schiff-base intermediate with DNA) is an active-site residue. Glu-3 (proton donor) is an active-site residue. Lys-58 acts as the Proton donor; for beta-elimination activity in catalysis. The DNA site is built by His-92, Arg-111, and Lys-154. Residues 239 to 273 form an FPG-type zinc finger; that stretch reads QVYGHAGEECSSCGTILEKIKVNGRGTTFCPHCQV. Arg-263 (proton donor; for delta-elimination activity) is an active-site residue.

It belongs to the FPG family. In terms of assembly, monomer. The cofactor is Zn(2+).

It carries out the reaction Hydrolysis of DNA containing ring-opened 7-methylguanine residues, releasing 2,6-diamino-4-hydroxy-5-(N-methyl)formamidopyrimidine.. The enzyme catalyses 2'-deoxyribonucleotide-(2'-deoxyribose 5'-phosphate)-2'-deoxyribonucleotide-DNA = a 3'-end 2'-deoxyribonucleotide-(2,3-dehydro-2,3-deoxyribose 5'-phosphate)-DNA + a 5'-end 5'-phospho-2'-deoxyribonucleoside-DNA + H(+). In terms of biological role, involved in base excision repair of DNA damaged by oxidation or by mutagenic agents. Acts as a DNA glycosylase that recognizes and removes damaged bases. Has a preference for oxidized purines, such as 7,8-dihydro-8-oxoguanine (8-oxoG). Has AP (apurinic/apyrimidinic) lyase activity and introduces nicks in the DNA strand. Cleaves the DNA backbone by beta-delta elimination to generate a single-strand break at the site of the removed base with both 3'- and 5'-phosphates. In Lactobacillus gasseri (strain ATCC 33323 / DSM 20243 / BCRC 14619 / CIP 102991 / JCM 1131 / KCTC 3163 / NCIMB 11718 / NCTC 13722 / AM63), this protein is Formamidopyrimidine-DNA glycosylase.